The primary structure comprises 379 residues: Glucose-1-phosphate adenylyltransferase (379 aa).

Residues tyrosine 99, glycine 164, 179–180 (EK), and serine 190 each bind alpha-D-glucose 1-phosphate.

The protein belongs to the bacterial/plant glucose-1-phosphate adenylyltransferase family. In terms of assembly, homotetramer.

The catalysed reaction is alpha-D-glucose 1-phosphate + ATP + H(+) = ADP-alpha-D-glucose + diphosphate. Its pathway is glycan biosynthesis; glycogen biosynthesis. Involved in the biosynthesis of ADP-glucose, a building block required for the elongation reactions to produce glycogen. Catalyzes the reaction between ATP and alpha-D-glucose 1-phosphate (G1P) to produce pyrophosphate and ADP-Glc. The protein is Glucose-1-phosphate adenylyltransferase of Bacillus licheniformis (strain ATCC 14580 / DSM 13 / JCM 2505 / CCUG 7422 / NBRC 12200 / NCIMB 9375 / NCTC 10341 / NRRL NRS-1264 / Gibson 46).